Reading from the N-terminus, the 643-residue chain is Protein RTF1 homolog (643 aa).

Disordered stretches follow at residues 1 to 107 and 124 to 262; these read MGDL…YKNE and ILSE…SDVP. Gly2 carries the N-acetylglycine modification. Over residues 65–77 the composition is skewed to basic and acidic residues; it reads KRLEAEREDRAAR. Ser87 is modified (phosphoserine). A compositionally biased stretch (basic and acidic residues) spans 124 to 157; that stretch reads ILSERADKKGDKNFTEKLRSKRESEKTPVSKKET. A compositionally biased stretch (low complexity) spans 162 to 171; the sequence is ASRGVRSSAR. A compositionally biased stretch (basic and acidic residues) spans 172 to 188; it reads SADRAAAKDDALNELRA. Low complexity predominate over residues 225 to 235; that stretch reads SSNLSSSSQSD. Residues 261–396 enclose the Plus3 domain; that stretch reads VPTFEDVKEV…KKEAIQRTNS (136 aa).

In terms of assembly, component of the nuclear PAF1 complex (PAF1C), which consists of VIP2/ELF7/PAF1, VIP3/SKI8/WDR61, VIP4/LEO1, VIP5/RTF1, VIP6/ELF8/CTR9 and CDC73.

The protein localises to the nucleus. Its function is as follows. Component of the PAF1 complex (PAF1C) which is involved in histone modifications such as methylation on histone H3 'Lys-4' (H3K4me3). Involved in regulation of flowering time. Required for the expression of the flowering repressors and FLC and MADS-box genes of the MAF family. Involved in the control of seed dormancy and germination. The polypeptide is Protein RTF1 homolog (Arabidopsis thaliana (Mouse-ear cress)).